Consider the following 173-residue polypeptide: Shikimate kinase 1 (173 aa).

14–19 provides a ligand contact to ATP; it reads GAGKST. Mg(2+) is bound at residue serine 18. Substrate is bound by residues aspartate 36, arginine 60, and glycine 82. Position 120 (arginine 120) interacts with ATP. Residue arginine 140 coordinates substrate. An ATP-binding site is contributed by glutamine 157.

Belongs to the shikimate kinase family. In terms of assembly, monomer. Requires Mg(2+) as cofactor.

The protein localises to the cytoplasm. It catalyses the reaction shikimate + ATP = 3-phosphoshikimate + ADP + H(+). The protein operates within metabolic intermediate biosynthesis; chorismate biosynthesis; chorismate from D-erythrose 4-phosphate and phosphoenolpyruvate: step 5/7. Its function is as follows. Catalyzes the specific phosphorylation of the 3-hydroxyl group of shikimic acid using ATP as a cosubstrate. The sequence is that of Shikimate kinase 1 from Shigella boydii serotype 18 (strain CDC 3083-94 / BS512).